The following is a 131-amino-acid chain: Small ribosomal subunit protein uS8 (131 aa).

Belongs to the universal ribosomal protein uS8 family. In terms of assembly, part of the 30S ribosomal subunit. Contacts proteins S5 and S12.

One of the primary rRNA binding proteins, it binds directly to 16S rRNA central domain where it helps coordinate assembly of the platform of the 30S subunit. This is Small ribosomal subunit protein uS8 from Aromatoleum aromaticum (strain DSM 19018 / LMG 30748 / EbN1) (Azoarcus sp. (strain EbN1)).